The chain runs to 195 residues: Pyruvoyl-dependent arginine decarboxylase AaxB (195 aa).

Serine 53 carries the pyruvic acid (Ser) modification.

The protein belongs to the pyruvoyl-dependent arginine decarboxylase family. As to quaternary structure, trimer of an alpha-beta dimer. It depends on pyruvate as a cofactor.

It is found in the cytoplasm. It carries out the reaction L-arginine + H(+) = agmatine + CO2. Inhibited by argininamide. Functionally, part of the AaxABC system, catalyzes the decarboxylation of L-arginine. The arginine uptake by the bacterium in the macrophage may be a virulence factor against the host innate immune response. The polypeptide is Pyruvoyl-dependent arginine decarboxylase AaxB (aaxB) (Chlamydia pneumoniae (Chlamydophila pneumoniae)).